The following is a 170-amino-acid chain: Helix-loop-helix protein 3 (170 aa).

The segment covering 1–26 (MTASTSSTPSTSTKIPSSSKSSVTKQ) has biased composition (low complexity). Disordered stretches follow at residues 1–42 (MTAS…VDQV) and 118–170 (TPSP…TETY). The basic motif; degenerate stretch occupies residues 26–39 (QTKQKRNERERKRV). The region spanning 26-79 (QTKQKRNERERKRVDQVNQGFVLLQERVPKAAGNKAKLSKVETLREAARYIQEL) is the bHLH domain. Residues 30–40 (KRNERERKRVD) are compositionally biased toward basic and acidic residues. A helix-loop-helix motif region spans residues 40–79 (DQVNQGFVLLQERVPKAAGNKAKLSKVETLREAARYIQEL). A compositionally biased stretch (low complexity) spans 143–157 (SHYYQESSSSSASTS).

As to quaternary structure, efficient DNA binding requires dimerization with another bHLH protein. Forms a heterodimer with hlh-2. In terms of tissue distribution, expressed in the ADL sensory neurons.

Its subcellular location is the nucleus. In terms of biological role, probable transcriptional regulator. May mediate transcriptional activation by binding to the E-box motif 5'-CANNTG-3'. Plays a role in the differentiation of the hermaphrodite-specific motor neurons (HSN) that are required for normal egg laying. Might play a role in serotonin production by regulating expression of the tryptophan hydrolase tph-1 which catalyzes serotonin synthesis, in the HSN neurons. Also plays a role in HSN axon guidance towards the vulva and the ventral nerve cord, possibly by promoting the expression of the netrin receptor unc-40. Under feeding conditions, involved in the regulation of the srh-234 chemoreceptor encoding gene expression in the ADL sensory neurons. Together with hlh-2, involved in the induction of programmed cell death in the sister cells of the serotonergic neurosecretory motor (NSM) neurons, probably through the activation of egl-1 transcription. The polypeptide is Helix-loop-helix protein 3 (Caenorhabditis elegans).